Reading from the N-terminus, the 419-residue chain is Tryptophan synthase beta chain (419 aa).

The residue at position 113 (K113) is an N6-(pyridoxal phosphate)lysine.

Belongs to the TrpB family. Tetramer of two alpha and two beta chains. The cofactor is pyridoxal 5'-phosphate.

It carries out the reaction (1S,2R)-1-C-(indol-3-yl)glycerol 3-phosphate + L-serine = D-glyceraldehyde 3-phosphate + L-tryptophan + H2O. It participates in amino-acid biosynthesis; L-tryptophan biosynthesis; L-tryptophan from chorismate: step 5/5. Functionally, the beta subunit is responsible for the synthesis of L-tryptophan from indole and L-serine. This chain is Tryptophan synthase beta chain, found in Picrophilus torridus (strain ATCC 700027 / DSM 9790 / JCM 10055 / NBRC 100828 / KAW 2/3).